We begin with the raw amino-acid sequence, 572 residues long: Terminal nucleotidyltransferase 4B (572 aa).

Residues 1-105 form a disordered region; that stretch reads MYRSGERLLG…ADGGGVVYSG (105 aa). A compositionally biased stretch (polar residues) spans 25–34; it reads ETTNNNNNHH. Residues 36 to 76 are compositionally biased toward low complexity; that stretch reads PGAWARRAGSSASSPPSASSSPHPSAAVPAADPADSASGSS. Positions 89–102 are enriched in gly residues; sequence RAAGGGRADGGGVV. V151 participates in a covalent cross-link: Glycyl lysine isopeptide (Lys-Gly) (interchain with G-Cter in SUMO2). 2 residues coordinate Mg(2+): D177 and D179. ATP-binding residues include G240, K265, S283, Y284, N368, and R372. Positions 308 to 368 constitute a PAP-associated domain; that stretch reads NYGVLLIEFF…YIEDPLQPGN (61 aa). The segment at 435-572 is disordered; the sequence is KNRPEPSCNG…RDAPLSDLCR (138 aa). Low complexity predominate over residues 446-464; that stretch reads VSSSSATQSSSSDVDSDAT. A Glycyl lysine isopeptide (Lys-Gly) (interchain with G-Cter in SUMO2) cross-link involves residue K470. The segment covering 477–494 has biased composition (polar residues); that stretch reads STGNRVGSQDVSLESSQA. Position 484 is a phosphoserine (S484). Glycyl lysine isopeptide (Lys-Gly) (interchain with G-Cter in SUMO2) cross-links involve residues K497, K512, and K526. The span at 499 to 514 shows a compositional bias: low complexity; sequence QSTQTTNTSNSTNKSQ. The span at 522-553 shows a compositional bias: polar residues; sequence RSSSKGFQGTTQTSHGSLMTNKQHQGKSNNQY. Residues 557–563 carry the Basic, involved in binding of the RNA primer motif; that stretch reads KKRKHKR.

It belongs to the DNA polymerase type-B-like family. Component of a nucleolar TRAMP-like complex, an ATP-dependent exosome regulatory complex consisting of a helicase (MTREX), an oligadenylate polymerase (TENT4B or TENT4A), and a substrate specific RNA-binding factor (ZCCHC7 or ZCCHC8). Several TRAMP-like complexes exist with specific compositions and are associated with nuclear, or nucleolar RNA exosomes. Interacts with CPEB1; the interaction is required for TENT4B-mediated translational control. Mg(2+) serves as cofactor. It depends on Mn(2+) as a cofactor.

It is found in the nucleus. The protein localises to the nucleolus. It localises to the cytoplasm. It carries out the reaction RNA(n) + ATP = RNA(n)-3'-adenine ribonucleotide + diphosphate. In terms of biological role, terminal nucleotidyltransferase that catalyzes preferentially the transfer of ATP and GTP on RNA 3' poly(A) tail creating a heterogeneous 3' poly(A) tail leading to mRNAs stabilization by protecting mRNAs from active deadenylation. Also functions as a catalytic subunit of a TRAMP-like complex which has a poly(A) RNA polymerase activity and is involved in a post-transcriptional quality control mechanism. Polyadenylation with short oligo(A) tails is required for the degradative activity of the exosome on several of its nuclear RNA substrates. Doesn't need a cofactor for polyadenylation activity (in vitro). Required for cytoplasmic polyadenylation of mRNAs involved in carbohydrate metabolism, including the glucose transporter SLC2A1/GLUT1. Plays a role in replication-dependent histone mRNA degradation, probably through terminal uridylation of mature histone mRNAs. May play a role in sister chromatid cohesion. Mediates 3' adenylation of the microRNA MIR21 followed by its 3'-to-5' trimming by the exoribonuclease PARN leading to degradation. Mediates 3' adenylation of H/ACA box snoRNAs (small nucleolar RNAs) followed by its 3'-to-5' trimming by the exoribonuclease PARN which enhances snoRNA stability and maturation. The protein is Terminal nucleotidyltransferase 4B of Homo sapiens (Human).